Here is a 558-residue protein sequence, read N- to C-terminus: Proline--tRNA ligase (558 aa).

This sequence belongs to the class-II aminoacyl-tRNA synthetase family. ProS type 1 subfamily. In terms of assembly, homodimer.

It localises to the cytoplasm. The catalysed reaction is tRNA(Pro) + L-proline + ATP = L-prolyl-tRNA(Pro) + AMP + diphosphate. Its function is as follows. Catalyzes the attachment of proline to tRNA(Pro) in a two-step reaction: proline is first activated by ATP to form Pro-AMP and then transferred to the acceptor end of tRNA(Pro). As ProRS can inadvertently accommodate and process non-cognate amino acids such as alanine and cysteine, to avoid such errors it has two additional distinct editing activities against alanine. One activity is designated as 'pretransfer' editing and involves the tRNA(Pro)-independent hydrolysis of activated Ala-AMP. The other activity is designated 'posttransfer' editing and involves deacylation of mischarged Ala-tRNA(Pro). The misacylated Cys-tRNA(Pro) is not edited by ProRS. The chain is Proline--tRNA ligase from Coprothermobacter proteolyticus (strain ATCC 35245 / DSM 5265 / OCM 4 / BT).